The following is a 105-amino-acid chain: MTESEFLQLSDDIFDRIEQAIDEHGLDADTLRQGNVLEIEFDSGDKVIVNRHAVNQEMWIAAKSGGYHFSRRGEAWIASRDGAEFYATLAEAIRAGSGEAFDFAG.

Belongs to the frataxin family.

Its function is as follows. Involved in iron-sulfur (Fe-S) cluster assembly. May act as a regulator of Fe-S biogenesis. The sequence is that of Iron-sulfur cluster assembly protein CyaY from Chromobacterium violaceum (strain ATCC 12472 / DSM 30191 / JCM 1249 / CCUG 213 / NBRC 12614 / NCIMB 9131 / NCTC 9757 / MK).